A 415-amino-acid chain; its full sequence is F-box/kelch-repeat protein At2g29600 (415 aa).

Residues 1–58 (MASISETSDDGSNGGDPNQKPEEPHKNPQEGKEEENQNEKPKEDDHQEEEVENVPQIP) are disordered. Basic and acidic residues predominate over residues 19–45 (QKPEEPHKNPQEGKEEENQNEKPKEDD). The 48-residue stretch at 56–103 (QIPPQMPLELIVSTIATLRRCHYPTLSLLSDSFRQVISSVDLFQTRSL) folds into the F-box domain. 4 Kelch repeats span residues 161–208 (KIYV…VIDG), 210–254 (IYVV…FNVH), 260–309 (KIYI…AVVP), and 311–355 (HLHV…KLMI).

The polypeptide is F-box/kelch-repeat protein At2g29600 (Arabidopsis thaliana (Mouse-ear cress)).